The following is a 347-amino-acid chain: Doublecortin domain-containing protein 2C (347 aa).

2 Doublecortin domains span residues 16–98 (KTIL…LDYI) and 136–217 (RYIN…IPYW). The tract at residues 235–260 (KYTQTKKRVESKVKEPLQNDSVPPRS) is disordered. Residues 241-251 (KRVESKVKEPL) show a composition bias toward basic and acidic residues.

The protein resides in the cell projection. It localises to the cilium. Its subcellular location is the flagellum. It is found in the cytoplasm. This Mus musculus (Mouse) protein is Doublecortin domain-containing protein 2C.